The chain runs to 95 residues: Small ribosomal subunit protein bS20c (95 aa).

This sequence belongs to the bacterial ribosomal protein bS20 family.

Its subcellular location is the plastid. It is found in the chloroplast. Its function is as follows. Binds directly to 16S ribosomal RNA. The chain is Small ribosomal subunit protein bS20c from Pyropia yezoensis (Susabi-nori).